We begin with the raw amino-acid sequence, 326 residues long: Protein-arginine N-acetylglucosaminyltransferase NleB2 (326 aa).

Residues 45–47 (QWF), Tyr-69, and 216–219 (YLDM) each bind UDP-N-acetyl-alpha-D-glucosamine. The short motif at 218–220 (DMD) is the DXD motif element. Asp-220 is a binding site for Mn(2+). Residue Glu-250 is the Proton acceptor of the active site. The Mn(2+) site is built by Asn-317 and Ser-319. Residues Ser-319 and 324-326 (SSW) each bind UDP-N-acetyl-alpha-D-glucosamine.

The protein belongs to the glycosyltransferase NleB family. It depends on Mn(2+) as a cofactor.

It localises to the secreted. Its subcellular location is the host cell. The enzyme catalyses L-arginyl-[protein] + UDP-N-acetyl-alpha-D-glucosamine = N(omega)-(N-acetyl-beta-D-glucosaminyl)-L-arginyl-[protein] + UDP + H(+). Its function is as follows. Protein-arginine N-acetylglucosaminyltransferase effector that catalyzes the transfer of a single N-acetylglucosamine (GlcNAc) to a conserved arginine residue of host target proteins. In contrast to NleB1, not able to disrupt TNF signaling in infected cells. Shows a lower enzymatic activity than NleB1. This chain is Protein-arginine N-acetylglucosaminyltransferase NleB2, found in Escherichia coli O127:H6 (strain E2348/69 / EPEC).